The primary structure comprises 937 residues: Glycine dehydrogenase (decarboxylating) (937 aa).

Lysine 686 carries the post-translational modification N6-(pyridoxal phosphate)lysine.

Belongs to the GcvP family. In terms of assembly, the glycine cleavage system is composed of four proteins: P, T, L and H. The cofactor is pyridoxal 5'-phosphate.

It carries out the reaction N(6)-[(R)-lipoyl]-L-lysyl-[glycine-cleavage complex H protein] + glycine + H(+) = N(6)-[(R)-S(8)-aminomethyldihydrolipoyl]-L-lysyl-[glycine-cleavage complex H protein] + CO2. In terms of biological role, the glycine cleavage system catalyzes the degradation of glycine. The P protein binds the alpha-amino group of glycine through its pyridoxal phosphate cofactor; CO(2) is released and the remaining methylamine moiety is then transferred to the lipoamide cofactor of the H protein. This is Glycine dehydrogenase (decarboxylating) from Mesorhizobium japonicum (strain LMG 29417 / CECT 9101 / MAFF 303099) (Mesorhizobium loti (strain MAFF 303099)).